The sequence spans 342 residues: Phenylalanine--tRNA ligase alpha subunit (342 aa).

Glu257 serves as a coordination point for Mg(2+).

It belongs to the class-II aminoacyl-tRNA synthetase family. Phe-tRNA synthetase alpha subunit type 1 subfamily. As to quaternary structure, tetramer of two alpha and two beta subunits. The cofactor is Mg(2+).

Its subcellular location is the cytoplasm. The enzyme catalyses tRNA(Phe) + L-phenylalanine + ATP = L-phenylalanyl-tRNA(Phe) + AMP + diphosphate + H(+). The sequence is that of Phenylalanine--tRNA ligase alpha subunit (pheS) from Chlamydia trachomatis serovar D (strain ATCC VR-885 / DSM 19411 / UW-3/Cx).